The following is a 165-amino-acid chain: UPF0114 protein ESA_00283 (165 aa).

Helical transmembrane passes span 15–35 (LLAPVYFGLSLALLALTVKFF), 53–73 (LILLLLSLVDMTLVGGLLVMV), and 136–156 (LMWYVIIHLTFVLSAFVMGYL).

The protein belongs to the UPF0114 family.

Its subcellular location is the cell membrane. The chain is UPF0114 protein ESA_00283 from Cronobacter sakazakii (strain ATCC BAA-894) (Enterobacter sakazakii).